The chain runs to 290 residues: Large ribosomal subunit protein uL2m (290 aa).

It belongs to the universal ribosomal protein uL2 family. Probably part of the large ribosomal subunit.

It is found in the hydrogenosome. The protein is Large ribosomal subunit protein uL2m (rpl2) of Nyctotherus ovalis.